We begin with the raw amino-acid sequence, 453 residues long: MAALSKSIPHSCYEIGHTWNPSCFGSYLQITQGAMEESFKIYAPLYLVAAILRRKNLDYYVHKLLPELLQSTSFLTANGSLYIAFFCILRKLLGRFYFWTPGFGAALPASYAAILIERKSRRGLLTIYMANQATEALFRMGVTRGYIKPIRHGEVLLFCITSALYMFFFRCRDGLKGFAFSALKFIVGKEEIPAHALLPENMYVKAEQKSKEHRGLSRNSLKRLMDIICKHGPRHRCCKHYEDNCISYCIKGFIRMFSIGYLIQCCLRIPSTFRHLFTKPSRLLSLFYNKENFQLGAFLGSFVSIYKGTSCFLRWVRNLDDELHALVAGFLAGISMMFYKSTTISMYLASKLVETMYFKGIEAGKCPYFPHADSVIYAVSTAVCFHAAVMEVQNLRPSYWKFLQRLTKGRFALMNRKALDVFDSEASKNFNNFVPKLDPRFCIVKPELPLDFS.

5 helical membrane-spanning segments follow: residues 68–88 (LLQSTSFLTANGSLYIAFFCI), 96–116 (FYFWTPGFGAALPASYAAILI), 149–169 (PIRHGEVLLFCITSALYMFFF), 293–313 (FQLGAFLGSFVSIYKGTSCFL), and 326–346 (LVAGFLAGISMMFYKSTTISM).

This sequence belongs to the TMEM135 family.

The protein resides in the mitochondrion membrane. The protein localises to the peroxisome membrane. Its function is as follows. Involved in mitochondrial metabolism by regulating the balance between mitochondrial fusion and fission. May act as a regulator of mitochondrial fission that promotes DNM1L-dependent fission through activation of DNM1L. May be involved in peroxisome organization. The protein is Transmembrane protein 135 (tmem135) of Xenopus laevis (African clawed frog).